The sequence spans 480 residues: Sestrin-2 (480 aa).

Position 1 is an N-acetylmethionine (M1). The tract at residues 20-43 is disordered; it reads RGGVAGPETREEHREGQARRGSRG. A compositionally biased stretch (basic and acidic residues) spans 27 to 37; it reads ETREEHREGQA. Positions 66-239 are N-terminal domain; mediates the alkylhydroperoxide reductase activity; that stretch reads GLEALMSSGR…APSPPSEQGT (174 aa). C125 acts as the Cysteine sulfenic acid (-SOH) intermediate in catalysis. K175 is covalently cross-linked (Glycyl lysine isopeptide (Lys-Gly) (interchain with G-Cter in ubiquitin)). Disordered stretches follow at residues 221 to 251 and 272 to 291; these read DAEG…NSGG and LLRD…ELEK. The segment covering 223-238 has biased composition (low complexity); sequence EGSPASQAPSPPSEQG. A Phosphoserine modification is found at S249. Residues 308–480 are C-terminal domain; mediates TORC1 regulation; that stretch reads PHPDILCFVE…ALRAITRYMT (173 aa). Residues 374 to 377, T386, and E451 each bind L-leucine; that span reads TYNT.

This sequence belongs to the sestrin family. In terms of assembly, interacts with the GATOR2 complex which is composed of MIOS, SEC13, SEH1L, WDR24 and WDR59; the interaction is negatively regulated by leucine. Conveys leucine availability via direct interaction with SEH1L and WDR24 components of the GATOR2 complex. Interacts with RRAGA, RRAGB, RRAGC and RRAGD; may function as a guanine nucleotide dissociation inhibitor for RRAGs and regulate them. May interact with the TORC2 complex. Interacts with KEAP1, RBX1, SQSTM and ULK1; to regulate the degradation of KEAP1. May also associate with the complex composed of TSC1, TSC2 and the AMP-responsive protein kinase/AMPK to regulate TORC1 signaling. May interact with PRDX1. Phosphorylated by ULK1 at multiple sites. Post-translationally, ubiquitinated at Lys-175 by RNF167 via 'Lys-63'-linked polyubiquitination in response to leucine deprivation: ubiquitination promotes SESN2-interaction with the GATOR2 complex, leading to inhibit the TORC1 signaling pathway. Deubiquitinated at Lys-175 by STAMBPL1, promoting the TORC1 signaling pathway. Ubiquitinated by RNF186; ubiquitination mediates proteasomal degradation. As to expression, detected in heart, liver and skeletal muscles (at protein level).

It localises to the cytoplasm. The catalysed reaction is a hydroperoxide + L-cysteinyl-[protein] = S-hydroxy-L-cysteinyl-[protein] + an alcohol. Its function is as follows. Functions as an intracellular leucine sensor that negatively regulates the mTORC1 signaling pathway through the GATOR complex. In absence of leucine, binds the GATOR subcomplex GATOR2 and prevents mTORC1 signaling. Binding of leucine to SESN2 disrupts its interaction with GATOR2 thereby activating the TORC1 signaling pathway. This stress-inducible metabolic regulator also plays a role in protection against oxidative and genotoxic stresses. May negatively regulate protein translation in response to endoplasmic reticulum stress, via mTORC1. May positively regulate the transcription by NFE2L2 of genes involved in the response to oxidative stress by facilitating the SQSTM1-mediated autophagic degradation of KEAP1. May also mediate TP53 inhibition of TORC1 signaling upon genotoxic stress. Moreover, may prevent the accumulation of reactive oxygen species (ROS) through the alkylhydroperoxide reductase activity born by the N-terminal domain of the protein. Was originally reported to contribute to oxidative stress resistance by reducing PRDX1. However, this could not be confirmed. The protein is Sestrin-2 of Mus musculus (Mouse).